The primary structure comprises 276 residues: Aquaporin-6 (276 aa).

Topologically, residues 1–22 (MEPGLCNRAYLLVGGLWTAISK) are cytoplasmic. Residues 23-43 (ALFAEFLATGLYVFFGVGSVL) traverse the membrane as a helical segment. Over 44–51 (PWPVALPS) the chain is Extracellular. Residues 52–70 (VLQVAITFNLATATAVQIS) traverse the membrane as a helical segment. Residues 71 to 75 (WKTSG) lie on the Cytoplasmic side of the membrane. An intramembrane region (discontinuously helical) is located at residues 76–85 (AHANPAVTLA). The NPA 1 motif lies at 79 to 81 (NPA). Residues 86-96 (YLVGSHISLPR) lie on the Cytoplasmic side of the membrane. A helical membrane pass occupies residues 97–118 (AVAYIAAQLAGATVGAALLYGV). Residues 119 to 138 (TPGGVRETLGVNVVHNSTST) lie on the Extracellular side of the membrane. N-linked (GlcNAc...) asparagine glycosylation is present at Asn134. Residues 139–159 (GQAVAVELVLTLQLVLCVFAS) traverse the membrane as a helical segment. Over 160–165 (MDSRQT) the chain is Cytoplasmic. A helical membrane pass occupies residues 166 to 185 (LGSPAAMIGTSVALGHLIGI). The Extracellular segment spans residues 186-189 (YFTG). The discontinuously helical intramembrane region spans 190-202 (CSMNPARSFGPAV). The NPA 2 motif lies at 193–195 (NPA). Residues 203-210 (IVGKFAVH) lie on the Extracellular side of the membrane. The helical transmembrane segment at 211–231 (WIFWVGPLTGAVLASLIYNFI) threads the bilayer. The Cytoplasmic portion of the chain corresponds to 232–276 (LFPDTKTVAQRLAILVGTTKVEKVVDLEPQKKESQTNSEDTEVSV).

The protein belongs to the MIP/aquaporin (TC 1.A.8) family. Homotetramer; each monomer provides an independent solute pore. In terms of processing, N-glycosylated. Kidney.

The protein resides in the cytoplasmic vesicle membrane. It catalyses the reaction nitrate(in) = nitrate(out). The catalysed reaction is iodide(out) = iodide(in). The enzyme catalyses bromide(in) = bromide(out). It carries out the reaction chloride(in) = chloride(out). It catalyses the reaction Na(+)(in) = Na(+)(out). The catalysed reaction is H2O(in) = H2O(out). The enzyme catalyses CO2(out) = CO2(in). It carries out the reaction NH4(+)(in) = NH4(+)(out). Activated by mercury and pH-gated, anion permeability is observed at pH 5.5 and increases markedly at pH 4.0. Selectivity for chloride increases at low pH. The water channel activity is stimulated by mercury by opposition to other aquaporins. Functionally, aquaporins form homotetrameric transmembrane channels, with each monomer independently mediating water transport across the plasma membrane along its osmotic gradient. Unlike classical aquaporins, AQP6 is an intracellular channel with selective anion permeability, particularly for nitrate, and exhibits very low water permeability. It may also facilitate the transport of gases, such as CO2 and NH4(+), as demonstrated in vitro. The polypeptide is Aquaporin-6 (Rattus norvegicus (Rat)).